The chain runs to 386 residues: Phosphatidyl-myo-inositol mannosyltransferase (386 aa).

Residues tyrosine 9 and glycine 16 each contribute to the GDP-alpha-D-mannose site. A 1,2-diacyl-sn-glycero-3-phospho-(1D-myo-inositol) contacts are provided by residues glutamine 18, 62 to 63, and arginine 68; that span reads YN. GDP-alpha-D-mannose-binding positions include arginine 196, 201-202, 251-253, lysine 256, 274-278, and glutamate 282; these read RK, VDD, and ESFGI.

This sequence belongs to the glycosyltransferase group 1 family. Glycosyltransferase 4 subfamily. As to quaternary structure, monomer. It depends on Mg(2+) as a cofactor.

The protein localises to the cell membrane. It catalyses the reaction a 1,2-diacyl-sn-glycero-3-phospho-(1D-myo-inositol) + GDP-alpha-D-mannose = a 1,2-diacyl-sn-glycero-3-phospho-[alpha-D-mannopyranosyl-(1&lt;-&gt;6)-D-myo-inositol] + GDP + H(+). The protein operates within phospholipid metabolism; phosphatidylinositol metabolism. In terms of biological role, involved in the biosynthesis of phosphatidyl-myo-inositol mannosides (PIM) which are early precursors in the biosynthesis of lipomannans (LM) and lipoarabinomannans (LAM). Catalyzes the addition of a mannosyl residue from GDP-D-mannose (GDP-Man) to the position 2 of the carrier lipid phosphatidyl-myo-inositol (PI) to generate a phosphatidyl-myo-inositol bearing an alpha-1,2-linked mannose residue (PIM1). In contrary to PimB, the mannosyltransferase PimA is unable to transfer a mannose residue to the position 6 of the phosphatidyl-myo-inositol of PIM1. This is Phosphatidyl-myo-inositol mannosyltransferase from Mycolicibacterium smegmatis (strain ATCC 700084 / mc(2)155) (Mycobacterium smegmatis).